Reading from the N-terminus, the 235-residue chain is Ribonuclease 3 (235 aa).

The 126-residue stretch at 6-131 folds into the RNase III domain; it reads IDQLERLTEH…LIAVMYLDGG (126 aa). Glu-44 lines the Mg(2+) pocket. The active site involves Asp-48. Mg(2+)-binding residues include Asp-117 and Glu-120. The active site involves Glu-120. Residues 156-225 form the DRBM domain; that stretch reads DAKTELQEWA…AEKVLRREGI (70 aa).

This sequence belongs to the ribonuclease III family. As to quaternary structure, homodimer. Mg(2+) serves as cofactor.

The protein localises to the cytoplasm. It carries out the reaction Endonucleolytic cleavage to 5'-phosphomonoester.. Functionally, digests double-stranded RNA. Involved in the processing of primary rRNA transcript to yield the immediate precursors to the large and small rRNAs (23S and 16S). Processes some mRNAs, and tRNAs when they are encoded in the rRNA operon. Processes pre-crRNA and tracrRNA of type II CRISPR loci if present in the organism. The sequence is that of Ribonuclease 3 from Bartonella quintana (strain Toulouse) (Rochalimaea quintana).